The primary structure comprises 753 residues: MSAEASTTPAAETPVNGTPETSTTPAAPAAEATAAETAAPSTSQPHSASLYVGELDPSVTEAMLYELFSSIGQVASIRVCRDAVTRRSLGYAYVNYNNTADGERALEDLNYTLIKGKPCRIMWSQRDPALRKTGQGNVFIKNLDAAIDNKALHDTFAAFGNILSCKVAQDEFGNSKGYGFVHYETAEAANNAIKHVNGMLLNDKKVFVGHHISKKDRQSKFEEMKANFTNVYIKNLDQEISEEEFRQMFEKFGEITSATLSRDQEGKSRGFGFVNYSTHDSAQAAVDEMNDKEVKGQKLYVGRAQKKHEREEELRKQYEAARLEKASKYQGVNLYVKNLTDDIDDEKLREMFAPYGTITSAKVMRDTNIERTQTPDSDKEKKEESKEEKPEAAEKTEEAAKESGDDQDKENKKSDKKVLGKSKGFGFVCFSSPDEASKAVTEMNQRMINGKPLYVALAQRKDVRRSQLEASIQARNTIRQQQAAAAAGMPQPYMQPAVFYGPGQQGFIPGGQRGGLPFAPQPGMMMGVPGGRPGQYPGPFPGQQGGRGMGPNQQIPPNFAQGIPMGAMGPGGIPNGMGYPQMGQVQFGRGAGGRGQVPGMPMGQGMRGPGYGQGRGGVPVQGQMRPGQGGRGQNAQPAAGRGEEAPAAGLTAQSLAAAPAPQQKQMLGEALYPKIQAQQPELAGKITGMLLEMDNTELLSLLEDDEALRAKVDEALSVYDEYMKNKGTEGEAAGEAPKPKEAATEESTEENKS.

A compositionally biased stretch (low complexity) spans 1–43 (MSAEASTTPAAETPVNGTPETSTTPAAPAAEATAAETAAPSTS). The tract at residues 1–49 (MSAEASTTPAAETPVNGTPETSTTPAAPAAEATAAETAAPSTSQPHSAS) is disordered. 4 consecutive RRM domains span residues 48–126 (ASLY…WSQR), 136–213 (GNVF…HHIS), 229–306 (TNVY…RAQK), and 332–460 (VNLY…LAQR). Disordered regions lie at residues 363–417 (VMRD…SDKK), 607–649 (RGPG…PAAG), and 727–753 (GTEGEAAGEAPKPKEAATEESTEENKS). Positions 376–417 (DSDKEKKEESKEEKPEAAEKTEEAAKESGDDQDKENKKSDKK) are enriched in basic and acidic residues. Residues 607 to 619 (RGPGYGQGRGGVP) are compositionally biased toward gly residues. The segment covering 633 to 649 (QNAQPAAGRGEEAPAAG) has biased composition (low complexity). One can recognise a PABC domain in the interval 647 to 724 (AAGLTAQSLA…ALSVYDEYMK (78 aa)). Residues 737-753 (PKPKEAATEESTEENKS) show a composition bias toward basic and acidic residues.

Belongs to the polyadenylate-binding protein type-1 family.

The protein resides in the cytoplasm. The protein localises to the nucleus. Functionally, binds the poly(A) tail of mRNA. Appears to be an important mediator of the multiple roles of the poly(A) tail in mRNA biogenesis, stability and translation. In the nucleus, involved in both mRNA cleavage and polyadenylation. Is also required for efficient mRNA export to the cytoplasm. Acts in concert with a poly(A)-specific nuclease (PAN) to affect poly(A) tail shortening, which may occur concomitantly with either nucleocytoplasmic mRNA transport or translational initiation. In the cytoplasm, stimulates translation initiation and regulates mRNA decay through translation termination-coupled poly(A) shortening, probably mediated by PAN. The polypeptide is Polyadenylate-binding protein, cytoplasmic and nuclear (pab1) (Aspergillus terreus (strain NIH 2624 / FGSC A1156)).